Consider the following 754-residue polypeptide: 5-methyltetrahydropteroyltriglutamate--homocysteine methyltransferase (754 aa).

5-methyltetrahydropteroyltri-L-glutamate-binding positions include 17–20 (RELK) and lysine 117. L-homocysteine contacts are provided by residues 431 to 433 (IGS) and glutamate 484. Residues 431-433 (IGS) and glutamate 484 contribute to the L-methionine site. Residues 515–516 (RC) and tryptophan 561 each bind 5-methyltetrahydropteroyltri-L-glutamate. Aspartate 599 is an L-homocysteine binding site. An L-methionine-binding site is contributed by aspartate 599. Glutamate 605 is a binding site for 5-methyltetrahydropteroyltri-L-glutamate. Zn(2+) contacts are provided by histidine 641, cysteine 643, and glutamate 665. The active-site Proton donor is the histidine 694. Cysteine 726 provides a ligand contact to Zn(2+).

This sequence belongs to the vitamin-B12 independent methionine synthase family. It depends on Zn(2+) as a cofactor.

The enzyme catalyses 5-methyltetrahydropteroyltri-L-glutamate + L-homocysteine = tetrahydropteroyltri-L-glutamate + L-methionine. The protein operates within amino-acid biosynthesis; L-methionine biosynthesis via de novo pathway; L-methionine from L-homocysteine (MetE route): step 1/1. Functionally, catalyzes the transfer of a methyl group from 5-methyltetrahydrofolate to homocysteine resulting in methionine formation. The chain is 5-methyltetrahydropteroyltriglutamate--homocysteine methyltransferase from Salmonella paratyphi A (strain ATCC 9150 / SARB42).